We begin with the raw amino-acid sequence, 274 residues long: Large ribosomal subunit protein uL2cz/uL2cy (274 aa).

Disordered stretches follow at residues Met-1–Lys-23 and Asn-224–Lys-274.

Belongs to the universal ribosomal protein uL2 family. In terms of assembly, part of the 50S ribosomal subunit.

The protein localises to the plastid. It is found in the chloroplast. The polypeptide is Large ribosomal subunit protein uL2cz/uL2cy (rpl2-A) (Lactuca sativa (Garden lettuce)).